Here is a 299-residue protein sequence, read N- to C-terminus: 4-hydroxybenzoate octaprenyltransferase (299 aa).

8 helical membrane passes run 33-53 (VGFLLLLWPTWWALWLAAGGV), 56-76 (WWTLCVFTTGIWLTRSAGCVI), 107-127 (LLMFATLMLIAFGLVLTMNQL), 151-171 (LPQVYLGLAFGWGIPMAFAAI), 180-200 (WLLYVANILWTTAYDTWCAMV), 214-234 (AILFADLDLTVQGVLYTLMLF), 247-267 (HTYWISLIAAVALIGYQFIIA), and 278-298 (AFMHNNWVGMTIFAGIALATT).

This sequence belongs to the UbiA prenyltransferase family. Mg(2+) is required as a cofactor.

It is found in the cell inner membrane. The catalysed reaction is all-trans-octaprenyl diphosphate + 4-hydroxybenzoate = 4-hydroxy-3-(all-trans-octaprenyl)benzoate + diphosphate. It participates in cofactor biosynthesis; ubiquinone biosynthesis. Its function is as follows. Catalyzes the prenylation of para-hydroxybenzoate (PHB) with an all-trans polyprenyl group. Mediates the second step in the final reaction sequence of ubiquinone-8 (UQ-8) biosynthesis, which is the condensation of the polyisoprenoid side chain with PHB, generating the first membrane-bound Q intermediate 3-octaprenyl-4-hydroxybenzoate. In Xylella fastidiosa (strain 9a5c), this protein is 4-hydroxybenzoate octaprenyltransferase.